The sequence spans 164 residues: UPF0114 protein Sbal_0780 (164 aa).

4 helical membrane-spanning segments follow: residues 15-35 (IMAP…VKFF), 53-73 (LVLL…IVMV), 109-129 (VAAS…MNAE), and 136-156 (IMWY…MGYL).

It belongs to the UPF0114 family.

The protein resides in the cell membrane. The sequence is that of UPF0114 protein Sbal_0780 from Shewanella baltica (strain OS155 / ATCC BAA-1091).